The chain runs to 599 residues: Prostaglandin G/H synthase 1 (599 aa).

The N-terminal stretch at Met1 to Leu23 is a signal peptide. The 39-residue stretch at Pro31–Thr69 folds into the EGF-like domain. 4 disulfide bridges follow: Cys35-Cys46, Cys36-Cys158, Cys40-Cys56, and Cys58-Cys68. N-linked (GlcNAc...) asparagine glycans are attached at residues Asn67, Asn103, and Asn143. The active-site Proton acceptor is the His206. Tyr384 functions as the For cyclooxygenase activity in the catalytic mechanism. His387 contacts heme b. Cys568 and Cys574 are disulfide-bonded.

This sequence belongs to the prostaglandin G/H synthase family. In terms of assembly, homodimer. It depends on heme b as a cofactor.

Its subcellular location is the microsome membrane. The protein localises to the endoplasmic reticulum membrane. The catalysed reaction is (5Z,8Z,11Z,14Z)-eicosatetraenoate + AH2 + 2 O2 = prostaglandin H2 + A + H2O. It catalyses the reaction (5Z,8Z,11Z,14Z)-eicosatetraenoate + 2 O2 = prostaglandin G2. It carries out the reaction prostaglandin G2 + AH2 = prostaglandin H2 + A + H2O. The enzyme catalyses (9Z,12Z)-octadecadienoate + AH2 + O2 = (9R)-hydroxy-(10E,12Z)-octadecadienoate + A + H2O. The catalysed reaction is (9Z,12Z)-octadecadienoate + AH2 + O2 = (9S)-hydroxy-(10E,12Z)-octadecadienoate + A + H2O. It catalyses the reaction (9Z,12Z)-octadecadienoate + AH2 + O2 = (13S)-hydroxy-(9Z,11E)-octadecadienoate + A + H2O. It carries out the reaction (9Z,12Z)-octadecadienoate + AH2 + O2 = (13R)-hydroxy-(9Z,11E)-octadecadienoate + A + H2O. It participates in lipid metabolism; prostaglandin biosynthesis. With respect to regulation, the cyclooxygenase activity is inhibited by nonsteroidal anti-inflammatory drugs (NSAIDs) including ibuprofen, flurbiprofen, ketoprofen, naproxen, flurbiprofen, anirolac, fenclofenac and diclofenac. Dual cyclooxygenase and peroxidase that plays an important role in the biosynthesis pathway of prostanoids, a class of C20 oxylipins mainly derived from arachidonate ((5Z,8Z,11Z,14Z)-eicosatetraenoate, AA, C20:4(n-6)), with a particular role in the inflammatory response. The cyclooxygenase activity oxygenates AA to the hydroperoxy endoperoxide prostaglandin G2 (PGG2), and the peroxidase activity reduces PGG2 to the hydroxy endoperoxide prostaglandin H2 (PGH2), the precursor of all 2-series prostaglandins and thromboxanes. This complex transformation is initiated by abstraction of hydrogen at carbon 13 (with S-stereochemistry), followed by insertion of molecular O2 to form the endoperoxide bridge between carbon 9 and 11 that defines prostaglandins. The insertion of a second molecule of O2 (bis-oxygenase activity) yields a hydroperoxy group in PGG2 that is then reduced to PGH2 by two electrons. Involved in the constitutive production of prostanoids in particular in the stomach and platelets. In gastric epithelial cells, it is a key step in the generation of prostaglandins, such as prostaglandin E2 (PGE2), which plays an important role in cytoprotection. In platelets, it is involved in the generation of thromboxane A2 (TXA2), which promotes platelet activation and aggregation, vasoconstriction and proliferation of vascular smooth muscle cells. Can also use linoleate (LA, (9Z,12Z)-octadecadienoate, C18:2(n-6)) as substrate and produce hydroxyoctadecadienoates (HODEs) in a regio- and stereospecific manner, being (9R)-HODE ((9R)-hydroxy-(10E,12Z)-octadecadienoate) and (13S)-HODE ((13S)-hydroxy-(9Z,11E)-octadecadienoate) its major products. This is Prostaglandin G/H synthase 1 from Homo sapiens (Human).